The sequence spans 321 residues: Cytochrome c biogenesis protein CcsA (321 aa).

7 helical membrane-spanning segments follow: residues 17–37 (IISI…IIGL), 41–61 (LEKG…IRWV), 68–88 (LSNL…IHIF), 143–163 (MLLS…LLVI), 227–247 (IINL…VWAN), 260–277 (ETWA…LHTR), and 288–308 (AIVA…VNLL).

The protein belongs to the CcmF/CycK/Ccl1/NrfE/CcsA family. May interact with Ccs1.

It is found in the plastid. It localises to the chloroplast thylakoid membrane. In terms of biological role, required during biogenesis of c-type cytochromes (cytochrome c6 and cytochrome f) at the step of heme attachment. The protein is Cytochrome c biogenesis protein CcsA of Piper cenocladum (Ant piper).